The sequence spans 330 residues: Ketol-acid reductoisomerase (NADP(+)) (330 aa).

Residues 2–182 (VEIYYDDDAS…GGTRAGALRT (181 aa)) form the KARI N-terminal Rossmann domain. Residues 25 to 28 (YGSQ), Ser-51, and Ser-53 contribute to the NADP(+) site. His-108 is an active-site residue. Gly-134 provides a ligand contact to NADP(+). The region spanning 183 to 328 (TFTEETETDL…AKLRPLMSWI (146 aa)) is the KARI C-terminal knotted domain. 4 residues coordinate Mg(2+): Asp-191, Glu-195, Glu-227, and Glu-231. Ser-252 provides a ligand contact to substrate.

The protein belongs to the ketol-acid reductoisomerase family. Mg(2+) serves as cofactor.

The enzyme catalyses (2R)-2,3-dihydroxy-3-methylbutanoate + NADP(+) = (2S)-2-acetolactate + NADPH + H(+). The catalysed reaction is (2R,3R)-2,3-dihydroxy-3-methylpentanoate + NADP(+) = (S)-2-ethyl-2-hydroxy-3-oxobutanoate + NADPH + H(+). It functions in the pathway amino-acid biosynthesis; L-isoleucine biosynthesis; L-isoleucine from 2-oxobutanoate: step 2/4. The protein operates within amino-acid biosynthesis; L-valine biosynthesis; L-valine from pyruvate: step 2/4. Its function is as follows. Involved in the biosynthesis of branched-chain amino acids (BCAA). Catalyzes an alkyl-migration followed by a ketol-acid reduction of (S)-2-acetolactate (S2AL) to yield (R)-2,3-dihydroxy-isovalerate. In the isomerase reaction, S2AL is rearranged via a Mg-dependent methyl migration to produce 3-hydroxy-3-methyl-2-ketobutyrate (HMKB). In the reductase reaction, this 2-ketoacid undergoes a metal-dependent reduction by NADPH to yield (R)-2,3-dihydroxy-isovalerate. This chain is Ketol-acid reductoisomerase (NADP(+)), found in Frankia alni (strain DSM 45986 / CECT 9034 / ACN14a).